The chain runs to 255 residues: 2-dehydro-3,6-dideoxy-6-sulfogluconate aldolase (255 aa).

The active-site Proton acceptor is histidine 38. The a divalent metal cation site is built by glutamate 141 and aspartate 167.

It belongs to the HpcH/HpaI aldolase family. As to quaternary structure, homohexamer; trimer of dimers. It depends on a divalent metal cation as a cofactor.

The catalysed reaction is 2-dehydro-3,6-dideoxy-6-sulfo-D-gluconate = (2S)-3-sulfolactaldehyde + pyruvate. In terms of biological role, catalyzes the retro-aldol cleavage of 2-dehydro-3,6-dideoxy-6-sulfo-D-gluconate to (2S)-3-sulfolactaldehyde and pyruvate. Is involved in a degradation pathway of sulfoquinovose (SQ) that allows P.putida SQ1 to use SQ as the sole carbon and energy source for growth. This is 2-dehydro-3,6-dideoxy-6-sulfogluconate aldolase from Pseudomonas putida (Arthrobacter siderocapsulatus).